We begin with the raw amino-acid sequence, 208 residues long: Protein DEHYDRATION-INDUCED 19 homolog 6 (208 aa).

The tract at residues 151-190 (VDSPRRSEADAEGHGSSSSDDQKRREQGVMDDASKEELEE) is disordered. Composition is skewed to basic and acidic residues over residues 153 to 163 (SPRRSEADAEG) and 170 to 190 (DDQK…ELEE).

The protein belongs to the Di19 family.

The chain is Protein DEHYDRATION-INDUCED 19 homolog 6 (DI19-6) from Oryza sativa subsp. japonica (Rice).